Here is a 94-residue protein sequence, read N- to C-terminus: PqqA binding protein (94 aa).

Belongs to the PqqD family. Monomer. Interacts with PqqE.

Its pathway is cofactor biosynthesis; pyrroloquinoline quinone biosynthesis. In terms of biological role, functions as a PqqA binding protein and presents PqqA to PqqE, in the pyrroloquinoline quinone (PQQ) biosynthetic pathway. The chain is PqqA binding protein from Acinetobacter baumannii (strain AB307-0294).